Reading from the N-terminus, the 141-residue chain is Large ribosomal subunit protein uL11 (141 aa).

It belongs to the universal ribosomal protein uL11 family. Part of the ribosomal stalk of the 50S ribosomal subunit. Interacts with L10 and the large rRNA to form the base of the stalk. L10 forms an elongated spine to which L12 dimers bind in a sequential fashion forming a multimeric L10(L12)X complex. In terms of processing, one or more lysine residues are methylated.

Its function is as follows. Forms part of the ribosomal stalk which helps the ribosome interact with GTP-bound translation factors. The chain is Large ribosomal subunit protein uL11 from Chlamydia muridarum (strain MoPn / Nigg).